Reading from the N-terminus, the 341-residue chain is Queuosine 5'-phosphate N-glycosylase/hydrolase (341 aa).

The residue at position 1 (methionine 1) is an N-acetylmethionine. Queuine-binding residues include histidine 53, phenylalanine 237, aspartate 239, aspartate 314, tyrosine 315, and aspartate 319. Aspartate 239 (nucleophile or transition state stabilizer) is an active-site residue.

Belongs to the QNG1 protein family.

It catalyses the reaction queuosine 5'-phosphate + H2O = queuine + D-ribose 5-phosphate. Catalyzes the hydrolysis of queuosine 5'-phosphate, releasing the nucleobase queuine (q). Is required for salvage of queuine from exogenous queuosine (Q) that is imported and then converted to queuosine 5'-phosphate intracellularly. In Bos taurus (Bovine), this protein is Queuosine 5'-phosphate N-glycosylase/hydrolase.